The following is a 907-amino-acid chain: Probable dipeptidyl-aminopeptidase B (907 aa).

A compositionally biased stretch (basic and acidic residues) spans 1–11 (MYDQVPYRDTD). A disordered region spans residues 1–71 (MYDQVPYRDT…RGKPDEDDDL (71 aa)). At 1-88 (MYDQVPYRDT…LKPMERKVRR (88 aa)) the chain is on the cytoplasmic side. The segment covering 22-36 (SDSNRSSIDTTSTTS) has biased composition (low complexity). The helical; Signal-anchor for type II membrane protein transmembrane segment at 89–109 (AMYLLAFLMIGGWFLALAVYV) threads the bilayer. The Vacuolar portion of the chain corresponds to 110 to 907 (SREHFGTPDT…PLRKRNRELV (798 aa)). N-linked (GlcNAc...) asparagine glycans are attached at residues asparagine 185 and asparagine 341. The active-site Charge relay system is the serine 746. N-linked (GlcNAc...) asparagine glycosylation occurs at asparagine 800. Residues aspartate 823 and histidine 856 each act as charge relay system in the active site.

It belongs to the peptidase S9B family.

It localises to the vacuole membrane. It catalyses the reaction Release of an N-terminal dipeptide, Xaa-Yaa-|-Zaa-, from a polypeptide, preferentially when Yaa is Pro, provided Zaa is neither Pro nor hydroxyproline.. In terms of biological role, type IV dipeptidyl-peptidase which removes N-terminal dipeptides sequentially from polypeptides having unsubstituted N-termini provided that the penultimate residue is proline. The protein is Probable dipeptidyl-aminopeptidase B (DAPB) of Tuber melanosporum (strain Mel28) (Perigord black truffle).